We begin with the raw amino-acid sequence, 380 residues long: Cytochrome b (380 aa).

Transmembrane regions (helical) follow at residues 34 to 54 (FGSLLGICLLTQILTGLLLAM), 78 to 99 (WLIRNLHANGASFFFICIYLHI), 114 to 134 (WNTGVILLLTLMATAFVGYVL), and 179 to 199 (FFALHFLLPFMIAGLTLIHLT). Heme b contacts are provided by histidine 84 and histidine 98. Heme b is bound by residues histidine 183 and histidine 197. An a ubiquinone-binding site is contributed by histidine 202. The next 4 helical transmembrane spans lie at 227 to 247 (LKDILGFMLLLLPLTTLALFS), 289 to 309 (LGGVLALAASVLVLFLAPFLH), 321 to 341 (ISQLLFWILVANLFILTWVGS), and 348 to 368 (FIIIGQLASLTYFTILLILFP).

Belongs to the cytochrome b family. The cytochrome bc1 complex contains 11 subunits: 3 respiratory subunits (MT-CYB, CYC1 and UQCRFS1), 2 core proteins (UQCRC1 and UQCRC2) and 6 low-molecular weight proteins (UQCRH/QCR6, UQCRB/QCR7, UQCRQ/QCR8, UQCR10/QCR9, UQCR11/QCR10 and a cleavage product of UQCRFS1). This cytochrome bc1 complex then forms a dimer. Requires heme b as cofactor.

The protein localises to the mitochondrion inner membrane. Its function is as follows. Component of the ubiquinol-cytochrome c reductase complex (complex III or cytochrome b-c1 complex) that is part of the mitochondrial respiratory chain. The b-c1 complex mediates electron transfer from ubiquinol to cytochrome c. Contributes to the generation of a proton gradient across the mitochondrial membrane that is then used for ATP synthesis. The protein is Cytochrome b (MT-CYB) of Puffinus opisthomelas (Black-vented shearwater).